The chain runs to 309 residues: Olfactory receptor 2AP1 (309 aa).

The Extracellular segment spans residues 1–23 (MKNKTVLTEFILLGLTDVPELQV). N-linked (GlcNAc...) asparagine glycosylation occurs at N3. A helical membrane pass occupies residues 24-47 (AVFTFLFLAYLLSILGNLTILILT). Over 48–55 (LLDSHLQT) the chain is Cytoplasmic. Residues 56-77 (PMYFFLRNFSFLEISFTNIFIP) traverse the membrane as a helical segment. Topologically, residues 78-98 (RVLISITTGNKSISFAGCFTQ) are extracellular. N-linked (GlcNAc...) asparagine glycosylation is present at N87. A disulfide bridge links C95 with C187. Residues 99–118 (YFFAMFLGATEFYLLAAMSY) traverse the membrane as a helical segment. The Cytoplasmic portion of the chain corresponds to 119 to 137 (DRYVAICKPLHYTTIMSSR). A helical transmembrane segment spans residues 138–156 (ICIQLIFCSWLGGLMAIIP). The Extracellular portion of the chain corresponds to 157-193 (TITLMSQQDFCASNRLNHYFCDYEPLLELSCSDTSLI). The helical transmembrane segment at 194–217 (EKVVFLVASVTLVVTLVLVILSYA) threads the bilayer. Over 218–234 (FIIKTILKLPSAQQRTK) the chain is Cytoplasmic. Residues 235–257 (AFSTCSSHMIVISLSYGSCMFMY) form a helical membrane-spanning segment. The Extracellular portion of the chain corresponds to 258–270 (INPSAKEGDTFNK). The chain crosses the membrane as a helical span at residues 271 to 290 (GVALLITSVAPLLNPFIYTL). Topologically, residues 291–309 (RNQQVKQPFKDMVKKLLNL) are cytoplasmic.

Belongs to the G-protein coupled receptor 1 family.

The protein localises to the cell membrane. Functionally, odorant receptor. The polypeptide is Olfactory receptor 2AP1 (OR2AP1) (Homo sapiens (Human)).